A 439-amino-acid chain; its full sequence is Casein kinase I homolog 3 (439 aa).

Residues tyrosine 15–leucine 286 enclose the Protein kinase domain. Residues isoleucine 21–leucine 29 and lysine 44 contribute to the ATP site. Catalysis depends on aspartate 134, which acts as the Proton acceptor. The segment at aspartate 366–phenylalanine 426 is disordered. A compositionally biased stretch (low complexity) spans alanine 372–alanine 413.

Belongs to the protein kinase superfamily. CK1 Ser/Thr protein kinase family. Casein kinase I subfamily.

Its subcellular location is the cytoplasm. It carries out the reaction L-seryl-[protein] + ATP = O-phospho-L-seryl-[protein] + ADP + H(+). It catalyses the reaction L-threonyl-[protein] + ATP = O-phospho-L-threonyl-[protein] + ADP + H(+). Functionally, casein kinases are operationally defined by their preferential utilization of acidic proteins such as caseins as substrates. This Schizosaccharomyces pombe (strain 972 / ATCC 24843) (Fission yeast) protein is Casein kinase I homolog 3 (cki3).